A 321-amino-acid polypeptide reads, in one-letter code: Methionyl-tRNA formyltransferase (321 aa).

112–115 (SILP) contributes to the (6S)-5,6,7,8-tetrahydrofolate binding site.

This sequence belongs to the Fmt family.

It carries out the reaction L-methionyl-tRNA(fMet) + (6R)-10-formyltetrahydrofolate = N-formyl-L-methionyl-tRNA(fMet) + (6S)-5,6,7,8-tetrahydrofolate + H(+). Functionally, attaches a formyl group to the free amino group of methionyl-tRNA(fMet). The formyl group appears to play a dual role in the initiator identity of N-formylmethionyl-tRNA by promoting its recognition by IF2 and preventing the misappropriation of this tRNA by the elongation apparatus. This Shewanella pealeana (strain ATCC 700345 / ANG-SQ1) protein is Methionyl-tRNA formyltransferase.